The primary structure comprises 266 residues: Energy-coupling factor transporter ATP-binding protein EcfA2 (266 aa).

The ABC transporter domain maps to 3–238 (IEVVNVSHIF…YDPRFFTSKM (236 aa)). Residue 43–48 (GSGKST) participates in ATP binding. Catalysis depends on Glu164, which acts as the Proton acceptor. Positions 220–266 (GTRMEFLEKYDPRFFTSKMLVMRRLVLKGEDPFSMSDDELLERVCNS) are required for heterodimer formation.

This sequence belongs to the ABC transporter superfamily. Energy-coupling factor EcfA family. In terms of assembly, forms a heterodimer with EcfA1. Forms a stable energy-coupling factor (ECF) transporter complex composed of 2 membrane-embedded substrate-binding proteins (S component, RibU, BioY), 2 ATP-binding proteins (A component) and 2 transmembrane proteins (T component) upon coexpression in E.coli. Stable subcomplexes with both A plus T components can also be isolated. This complex interacts with at least 2 substrate-specific components, BioY and RibU.

Its subcellular location is the cell inner membrane. Functionally, ATP-binding (A) component of a common energy-coupling factor (ECF) ABC-transporter complex. Unlike classic ABC transporters this ECF transporter provides the energy necessary to transport a number of different substrates. Expression of the complex plus RibU in E.coli allows riboflavin uptake; uptake does not occur in the absence of RibU or the EcfA1A2T complex. The chain is Energy-coupling factor transporter ATP-binding protein EcfA2 (ecfA2) from Thermotoga maritima (strain ATCC 43589 / DSM 3109 / JCM 10099 / NBRC 100826 / MSB8).